Here is a 243-residue protein sequence, read N- to C-terminus: Phosphoribosyl isomerase A (243 aa).

Asp-9 functions as the Proton acceptor in the catalytic mechanism. Asp-128 acts as the Proton donor in catalysis.

Belongs to the HisA/HisF family.

It is found in the cytoplasm. The enzyme catalyses 1-(5-phospho-beta-D-ribosyl)-5-[(5-phospho-beta-D-ribosylamino)methylideneamino]imidazole-4-carboxamide = 5-[(5-phospho-1-deoxy-D-ribulos-1-ylimino)methylamino]-1-(5-phospho-beta-D-ribosyl)imidazole-4-carboxamide. It carries out the reaction N-(5-phospho-beta-D-ribosyl)anthranilate = 1-(2-carboxyphenylamino)-1-deoxy-D-ribulose 5-phosphate. It participates in amino-acid biosynthesis; L-histidine biosynthesis; L-histidine from 5-phospho-alpha-D-ribose 1-diphosphate: step 4/9. The protein operates within amino-acid biosynthesis; L-tryptophan biosynthesis; L-tryptophan from chorismate: step 3/5. In terms of biological role, involved in both the histidine and tryptophan biosynthetic pathways. This Mycolicibacterium paratuberculosis (strain ATCC BAA-968 / K-10) (Mycobacterium paratuberculosis) protein is Phosphoribosyl isomerase A.